The primary structure comprises 426 residues: Probable M18 family aminopeptidase 2 (426 aa).

Zn(2+) contacts are provided by H79, H156, and H399.

Belongs to the peptidase M18 family. Requires Zn(2+) as cofactor.

The sequence is that of Probable M18 family aminopeptidase 2 (apeB) from Mycobacterium leprae (strain TN).